A 604-amino-acid polypeptide reads, in one-letter code: Putative O-acetyltransferase SACOL0978 (604 aa).

Helical transmembrane passes span 15-35 (YIPGLDGLRAIAVLGIIIYHL), 43-63 (GFLGVDTFFVISGYLITSLLL), 85-105 (LLPAVIVLLMVVGTATLLLKS), 150-170 (AIEEQFYIFFPVILVTLLLTI), 176-196 (IGFIFWGVSIISLGLMMFIYS), 212-232 (LQTLLLGVILAFLWPPFKLKN), 240-260 (YVIDSIGSLSFIVLILLFFII), 267-287 (IYDGGFYLISILTLFIIASVV), 310-330 (YSLYLWHFAVISFVHSYYVDG), 332-352 (IPVYVYFIDISLTIIFAELSY), and 377-397 (FIRMAIVVTLLIPFMLILVGA). Active-site residues include Ser-459, Asp-581, and His-584.

Belongs to the acyltransferase 3 family.

It is found in the cell membrane. This Staphylococcus aureus (strain COL) protein is Putative O-acetyltransferase SACOL0978.